Here is a 448-residue protein sequence, read N- to C-terminus: Alpha-2B adrenergic receptor (448 aa).

The Extracellular portion of the chain corresponds to 1–12 (MDHQEPYSVQAT). Residues 13–38 (AAIAAVITFLILFTIFGNALVILAVL) form a helical membrane-spanning segment. Residues 39 to 49 (TSRSLPAPQNL) lie on the Cytoplasmic side of the membrane. A helical transmembrane segment spans residues 50–75 (FLVSLAAADILVATLIIPFSLANELL). The Extracellular portion of the chain corresponds to 76–85 (GYWYFWRTWC). An intrachain disulfide couples Cys85 to Cys163. Residues 86-108 (EVYLALDVLFCTSSIVHLCAISL) form a helical membrane-spanning segment. Over 109-130 (DRYWAVSRALEYNSKRTPRRIK) the chain is Cytoplasmic. A helical transmembrane segment spans residues 131–153 (CIILTVWLIAAVISLPPLIYKGD). The Extracellular segment spans residues 154–168 (QGPSPRGPQCKINQE). Residues 169–192 (AWYILASSIGSFFAPCLIMILVYL) form a helical membrane-spanning segment. The Cytoplasmic portion of the chain corresponds to 193 to 370 (RIYLIAKRSH…MTREKRFTFV (178 aa)). Residues 203–326 (RRGPRAKGGP…PASMCSPSLQ (124 aa)) are disordered. Over residues 293-309 (AEEEAEEEEEEEGDECE) the composition is skewed to acidic residues. The chain crosses the membrane as a helical span at residues 371–394 (LAVVIGVFVLCWFPFFFTYSLGAI). The Extracellular segment spans residues 395-403 (CPQHCKVPH). Residues 404–427 (GLFQFFFWIGYCNSSLNPVIYTIF) traverse the membrane as a helical segment. Residues 428 to 448 (NQDFRRAFRRILCRQWTQTAW) lie on the Cytoplasmic side of the membrane. Cys440 carries S-palmitoyl cysteine lipidation.

It belongs to the G-protein coupled receptor 1 family. Adrenergic receptor subfamily. ADRA2B sub-subfamily. As to quaternary structure, interacts with RAB26. Interacts with PPP1R9B.

It is found in the cell membrane. In terms of biological role, alpha-2 adrenergic receptors mediate the catecholamine-induced inhibition of adenylate cyclase through the action of G proteins. The protein is Alpha-2B adrenergic receptor (ADRA2B) of Cavia porcellus (Guinea pig).